A 73-amino-acid polypeptide reads, in one-letter code: Acyl carrier protein homolog (73 aa).

The Carrier domain occupies 1–72; the sequence is MAIKEWIITQ…DIIVLIEQKS (72 aa). Serine 32 bears the O-(pantetheine 4'-phosphoryl)serine mark.

In terms of processing, 4'-phosphopantetheine is transferred from CoA to a specific serine of the apo-ACP-like protein.

Its pathway is lipid metabolism; fatty acid biosynthesis. Carrier of the growing fatty acid chain in fatty acid biosynthesis. The protein is Acyl carrier protein homolog of Mycoplasmopsis pulmonis (strain UAB CTIP) (Mycoplasma pulmonis).